A 230-amino-acid polypeptide reads, in one-letter code: Proteasome subunit alpha (230 aa).

The protein belongs to the peptidase T1A family. In terms of assembly, the 20S proteasome core is composed of 14 alpha and 14 beta subunits that assemble into four stacked heptameric rings, resulting in a barrel-shaped structure. The two inner rings, each composed of seven catalytic beta subunits, are sandwiched by two outer rings, each composed of seven alpha subunits. The catalytic chamber with the active sites is on the inside of the barrel. Has a gated structure, the ends of the cylinder being occluded by the N-termini of the alpha-subunits. Is capped by the proteasome-associated ATPase, ARC.

The protein localises to the cytoplasm. It participates in protein degradation; proteasomal Pup-dependent pathway. With respect to regulation, the formation of the proteasomal ATPase ARC-20S proteasome complex, likely via the docking of the C-termini of ARC into the intersubunit pockets in the alpha-rings, may trigger opening of the gate for substrate entry. Interconversion between the open-gate and close-gate conformations leads to a dynamic regulation of the 20S proteasome proteolysis activity. In terms of biological role, component of the proteasome core, a large protease complex with broad specificity involved in protein degradation. The chain is Proteasome subunit alpha from Thermomonospora curvata (strain ATCC 19995 / DSM 43183 / JCM 3096 / KCTC 9072 / NBRC 15933 / NCIMB 10081 / Henssen B9).